The sequence spans 179 residues: Inner membrane-spanning protein YciB (179 aa).

Transmembrane regions (helical) follow at residues 22–42, 50–70, 76–96, 121–141, and 149–169; these read IYAATAALIVATAIVLIYSWV, MALITFVLVVVFGGLTLFFHN, WKVTVIYALFAGALLVSQWVM, LAWAVFFILCGLANIYIAFWL, and FKVFGLTALTLIFTLLSGIYI.

Belongs to the YciB family.

Its subcellular location is the cell inner membrane. In terms of biological role, plays a role in cell envelope biogenesis, maintenance of cell envelope integrity and membrane homeostasis. The polypeptide is Inner membrane-spanning protein YciB (Shigella boydii serotype 4 (strain Sb227)).